Here is a 184-residue protein sequence, read N- to C-terminus: Helix-loop-helix protein ngn-1 (184 aa).

Residues 1–55 (MYHHSPFYPHHLQTGEQDLDMERENDMDQNSKNSTQKPVKREKRRYRCRKRSPAT) are disordered. A compositionally biased stretch (polar residues) spans 28–37 (DQNSKNSTQK). A compositionally biased stretch (basic residues) spans 38–52 (PVKREKRRYRCRKRS). The tract at residues 62–75 (VRRDKANARERRRM) is basic motif. Positions 62–114 (VRRDKANARERRRMNSLNDALEHLRGILPALPDEPKMTKIETLRKAQEYIASL) constitute a bHLH domain. The interval 76–114 (NSLNDALEHLRGILPALPDEPKMTKIETLRKAQEYIASL) is helix-loop-helix motif. Positions 164–184 (SNPPSQMYYHHHHQSPSFPHH) are disordered. The span at 172 to 184 (YHHHHQSPSFPHH) shows a compositional bias: basic residues.

Interacts with hlh-2; the interaction is direct.

Its subcellular location is the nucleus. In terms of biological role, acts as a transcriptional regulator. Regulates expression of various genes, including homeobox protein unc-42 and helix-loop-helix protein hlh-34. Required for embryonic viability, neuromuscular development, organization of the nerve ring and neuronal cell body location. Regulates AIY neuron axon morphology and cell fate. Plays a role in cell autonomously establishing a neuronal left-right asymmetry. Involved in regulating glial specification. The protein is Helix-loop-helix protein ngn-1 of Caenorhabditis elegans.